A 443-amino-acid polypeptide reads, in one-letter code: GTPase Der (443 aa).

2 consecutive EngA-type G domains span residues Pro-3–Glu-167 and Val-176–Met-349. GTP-binding positions include Gly-9 to Ser-16, Asp-56 to Phe-60, Asn-119 to Glu-122, Gly-182 to Ser-189, Asp-229 to Met-233, and Asn-294 to Asp-297. The KH-like domain occupies Ala-350–Lys-434.

This sequence belongs to the TRAFAC class TrmE-Era-EngA-EngB-Septin-like GTPase superfamily. EngA (Der) GTPase family. Associates with the 50S ribosomal subunit.

Functionally, GTPase that plays an essential role in the late steps of ribosome biogenesis. This Dechloromonas aromatica (strain RCB) protein is GTPase Der.